The following is a 555-amino-acid chain: E3 ubiquitin-protein ligase ARIH1 (555 aa).

Acidic residues predominate over residues 1–47 (MDSDEGYNYEFDEDEECSEEDSGAEEEEDEDDDEPDDDNLDLGEVEL). Residues 1–93 (MDSDEGYNYE…GGGGGPGHEQ (93 aa)) are disordered. Over residues 65–90 (ETGGGGGSALGPGGGGGGGGGGGGPG) the composition is skewed to gly residues. The interval 103–151 (TAEQILQHMVECIREVNEVIQNPATITRILLSHFNWDKEKLMERYFDGN) is UBA-like. K140 bears the N6-acetyllysine mark. Residues 180–391 (QDMPCQICYL…SAWYNCNRYN (212 aa)) are TRIAD supradomain. Residues C184, C187, C201, H203, C206, C209, C229, C234, C274, C279, C295, C297, C302, C305, H310, C315, C342, and C345 each coordinate Zn(2+). The segment at 184–234 (CQICYLNYPNSYFTGLECGHKFCMQCWSEYLTTKIMEEGMGQTISCPAHGC) adopts an RING-type 1 zinc-finger fold. Residues 254 to 315 (LKYQHLITNS…GENWHDPVKC (62 aa)) form an IBR-type zinc finger. The segment at 342–373 (CPKCHVTIEKDGGCNHMVCRNQNCKAEFCWVC) adopts an RING-type 2; atypical zinc-finger fold. C355 is an active-site residue. The Zn(2+) site is built by C360, C365, C370, C373, H380, and C387. The interval 406-555 (RAALQRYLFY…EKDLWEYIED (150 aa)) is ariadne domain.

The protein belongs to the RBR family. Ariadne subfamily. Interacts (via the first RING-type zinc finger) with UBE2L3. Associates with cullin-RING ubiquitin ligase (CRL) complexes containing CUL1, CUL2 and CUL3. Interacts with neddylated CUL1. Interacts with neddylated CUL2. Interacts with neddylated CUL3. Interacts with neddylated CUL4A.

Its subcellular location is the cytoplasm. The protein localises to the nucleus. The protein resides in the cajal body. It carries out the reaction [E2 ubiquitin-conjugating enzyme]-S-ubiquitinyl-L-cysteine + [acceptor protein]-L-lysine = [E2 ubiquitin-conjugating enzyme]-L-cysteine + [acceptor protein]-N(6)-ubiquitinyl-L-lysine.. Its pathway is protein modification; protein ubiquitination. With respect to regulation, autoinhibited by the ariadne domain, which masks the second RING-type zinc finger that contains the active site and inhibits the E3 activity. Inhibition is relieved upon binding to neddylated cullin-RING ubiquitin ligase complexes, which activate the E3 ligase activity of ARIH1. In terms of biological role, E3 ubiquitin-protein ligase, which catalyzes ubiquitination of target proteins together with ubiquitin-conjugating enzyme E2 UBE2L3. Acts as an atypical E3 ubiquitin-protein ligase by working together with cullin-RING ubiquitin ligase (CRL) complexes and initiating ubiquitination of CRL substrates: associates with CRL complexes and specifically mediates addition of the first ubiquitin on CRLs targets. The initial ubiquitin is then elongated by CDC34/UBE2R1 and UBE2R2. E3 ubiquitin-protein ligase activity is activated upon binding to neddylated cullin-RING ubiquitin ligase complexes. Plays a role in protein translation in response to DNA damage by mediating ubiquitination of EIF4E2, the consequences of EIF4E2 ubiquitination are however unclear. According to a report, EIF4E2 ubiquitination leads to promote EIF4E2 cap-binding and protein translation arrest. According to another report EIF4E2 ubiquitination leads to its subsequent degradation. Acts as the ligase involved in ISGylation of EIF4E2. In vitro, controls the degradation of the LINC (LInker of Nucleoskeleton and Cytoskeleton) complex member SUN2 and may therefore have a role in the formation and localization of the LINC complex, and as a consequence, may act in nuclear subcellular localization and nuclear morphology. This chain is E3 ubiquitin-protein ligase ARIH1 (ARIH1), found in Bos taurus (Bovine).